The sequence spans 451 residues: MKNNDTIAAIATPPGRGGIGIVRISGTNLEQLAQTILGKLPDPRHAGLFNFLDQNNQVIDQGIVLYFPSPNSYTGEDVLELHGHGGPAVMNLLLTRCLQLGARLAEPGEFTLRAFLNEKLDLAQAEGVADLIEASTANAARCAVRSLHGEFSSAIHQLVSALIDLRVLVEATLDFPEEEIDFLQSAHAVEQLASIQTKLEQVLSASRRGNLLQEGIKVVLTGQPNVGKSSLLNRLAGDEIAIVTEIPGTTRDTIRQSIEIEGIPLHLIDTAGLRETSDIVEQHGIARAYAAIEQADLVLLLVDGRYGVTKEDHSVLARLPKELPVLTVHNKIDLSGQLSRIEEDTSGTAIYLSVKSGEGIELLRTVLLKTVGWQTNIAGEGAYMARQRHLQALLHAKELLKRAETWLHTADQLEILAEELRLAQQALSSITGEFTSDDLLGEIFSNFCIGK.

Positions 23, 80, and 119 each coordinate (6S)-5-formyl-5,6,7,8-tetrahydrofolate. Residues 215–372 (GIKVVLTGQP…LRTVLLKTVG (158 aa)) enclose the TrmE-type G domain. Asparagine 225 contacts K(+). Residues 225–230 (NVGKSS), 244–250 (TEIPGTT), and 269–272 (DTAG) contribute to the GTP site. A Mg(2+)-binding site is contributed by serine 229. 3 residues coordinate K(+): threonine 244, isoleucine 246, and threonine 249. Residue threonine 250 participates in Mg(2+) binding. Position 451 (lysine 451) interacts with (6S)-5-formyl-5,6,7,8-tetrahydrofolate.

This sequence belongs to the TRAFAC class TrmE-Era-EngA-EngB-Septin-like GTPase superfamily. TrmE GTPase family. In terms of assembly, homodimer. Heterotetramer of two MnmE and two MnmG subunits. Requires K(+) as cofactor.

It is found in the cytoplasm. Exhibits a very high intrinsic GTPase hydrolysis rate. Involved in the addition of a carboxymethylaminomethyl (cmnm) group at the wobble position (U34) of certain tRNAs, forming tRNA-cmnm(5)s(2)U34. This Nitrosomonas eutropha (strain DSM 101675 / C91 / Nm57) protein is tRNA modification GTPase MnmE.